Reading from the N-terminus, the 1196-residue chain is ATP-dependent helicase/deoxyribonuclease subunit B (1196 aa).

Residues Cys-823, Cys-1149, Cys-1152, and Cys-1158 each contribute to the [4Fe-4S] cluster site.

The protein belongs to the helicase family. AddB/RexB type 2 subfamily. As to quaternary structure, heterodimer of AddA and RexB. The cofactor is Mg(2+). It depends on [4Fe-4S] cluster as a cofactor.

The heterodimer acts as both an ATP-dependent DNA helicase and an ATP-dependent, dual-direction single-stranded exonuclease. Recognizes the chi site generating a DNA molecule suitable for the initiation of homologous recombination. This subunit has 5' -&gt; 3' nuclease activity but not helicase activity. The sequence is that of ATP-dependent helicase/deoxyribonuclease subunit B from Enterococcus faecalis (strain ATCC 700802 / V583).